Reading from the N-terminus, the 156-residue chain is ATP synthase subunit b (156 aa).

A helical transmembrane segment spans residues 12-32; the sequence is VAFLIFVLFCMKYVWPPVITA.

The protein belongs to the ATPase B chain family. In terms of assembly, F-type ATPases have 2 components, F(1) - the catalytic core - and F(0) - the membrane proton channel. F(1) has five subunits: alpha(3), beta(3), gamma(1), delta(1), epsilon(1). F(0) has three main subunits: a(1), b(2) and c(10-14). The alpha and beta chains form an alternating ring which encloses part of the gamma chain. F(1) is attached to F(0) by a central stalk formed by the gamma and epsilon chains, while a peripheral stalk is formed by the delta and b chains.

It localises to the cell inner membrane. F(1)F(0) ATP synthase produces ATP from ADP in the presence of a proton or sodium gradient. F-type ATPases consist of two structural domains, F(1) containing the extramembraneous catalytic core and F(0) containing the membrane proton channel, linked together by a central stalk and a peripheral stalk. During catalysis, ATP synthesis in the catalytic domain of F(1) is coupled via a rotary mechanism of the central stalk subunits to proton translocation. In terms of biological role, component of the F(0) channel, it forms part of the peripheral stalk, linking F(1) to F(0). The chain is ATP synthase subunit b from Pseudomonas putida (strain ATCC 47054 / DSM 6125 / CFBP 8728 / NCIMB 11950 / KT2440).